The primary structure comprises 321 residues: Phosphopantothenate--cysteine ligase 1 (321 aa).

This sequence belongs to the PPC synthetase family. In terms of assembly, homodimer.

It carries out the reaction (R)-4'-phosphopantothenate + L-cysteine + CTP = N-[(R)-4-phosphopantothenoyl]-L-cysteine + CMP + diphosphate + H(+). It functions in the pathway cofactor biosynthesis; coenzyme A biosynthesis; CoA from (R)-pantothenate: step 2/5. Its function is as follows. Catalyzes the first step in the biosynthesis of coenzyme A from vitamin B5, where cysteine is conjugated to 4'-phosphopantothenate to form 4-phosphopantothenoylcysteine. The sequence is that of Phosphopantothenate--cysteine ligase 1 from Oryza sativa subsp. japonica (Rice).